We begin with the raw amino-acid sequence, 503 residues long: Glycerol kinase (503 aa).

Thr14 contacts ADP. Thr14, Thr15, and Ser16 together coordinate ATP. Position 14 (Thr14) interacts with sn-glycerol 3-phosphate. Residue Arg18 coordinates ADP. Residues Arg84, Glu85, Tyr136, and Asp246 each contribute to the sn-glycerol 3-phosphate site. Residues Arg84, Glu85, Tyr136, Asp246, and Gln247 each contribute to the glycerol site. The ADP site is built by Thr268 and Gly311. 4 residues coordinate ATP: Thr268, Gly311, Gln315, and Gly412. ADP contacts are provided by Gly412 and Asn416.

Belongs to the FGGY kinase family.

It carries out the reaction glycerol + ATP = sn-glycerol 3-phosphate + ADP + H(+). It participates in polyol metabolism; glycerol degradation via glycerol kinase pathway; sn-glycerol 3-phosphate from glycerol: step 1/1. Inhibited by fructose 1,6-bisphosphate (FBP). Key enzyme in the regulation of glycerol uptake and metabolism. Catalyzes the phosphorylation of glycerol to yield sn-glycerol 3-phosphate. The sequence is that of Glycerol kinase from Haemophilus influenzae (strain PittGG).